A 398-amino-acid chain; its full sequence is uncharacterized protein (398 aa).

2 consecutive transmembrane segments (helical) span residues 31-51 (VVFS…CLLF) and 56-76 (AFIT…FFGC).

Belongs to the chlamydial CPn_0129/CT_036/TC_0306 family.

The protein resides in the cell membrane. This is an uncharacterized protein from Chlamydia muridarum (strain MoPn / Nigg).